A 146-amino-acid polypeptide reads, in one-letter code: METELMRIGVSLPDTLLGKFDEIIEKRGYSSRSEAIRDSIRSYISYNEWMGNIKGHHVGTIVIIYDHTQRGLSNVLTDIQHHYSHLIRSSIHIYPDREDCFEIVVLEGEGKEITELAEAIMALKGVKLSKLITTESNETDEPSIVI.

Ni(2+) is bound by residues His81, His92, Tyr94, and Cys100.

Belongs to the transcriptional regulatory CopG/NikR family. Ni(2+) is required as a cofactor.

Functionally, transcriptional regulator. This Methanosarcina mazei (strain ATCC BAA-159 / DSM 3647 / Goe1 / Go1 / JCM 11833 / OCM 88) (Methanosarcina frisia) protein is Putative nickel-responsive regulator 1.